A 791-amino-acid chain; its full sequence is AP-1 complex subunit gamma-like 2 (791 aa).

Residues 671-786 enclose the GAE domain; sequence APIPSVRVFE…QEIFEVDNLP (116 aa).

This sequence belongs to the adaptor complexes large subunit family. As to quaternary structure, may interact with AP1S1/Sigma1A-adaptin and AP1S2/Sigma1B-adaptin. Probably does not interact with APB1. Interacts (via GAE domain) with RABEP1, NECAP1, CLINT1 and AFTPH/aftiphilin. Interacts with HBV major surface antigen L. Interacts with HBV core protein C in a ubiquitin-dependent manner. Binds ubiquitin. As to expression, widely expressed.

Its subcellular location is the golgi apparatus membrane. It is found in the cytoplasmic vesicle membrane. The protein resides in the endosome membrane. In terms of biological role, may function in protein sorting in late endosomes or multivesucular bodies (MVBs). Involved in MVB-assisted maturation of hepatitis B virus (HBV). The protein is AP-1 complex subunit gamma-like 2 (Ap1g2) of Mus musculus (Mouse).